Reading from the N-terminus, the 283-residue chain is Pantothenate synthetase (283 aa).

An ATP-binding site is contributed by 31–38 (MGALHDGH). The active-site Proton donor is H38. Q62 provides a ligand contact to (R)-pantoate. Q62 is a binding site for beta-alanine. Position 148–151 (148–151 (GKKD)) interacts with ATP. Q154 lines the (R)-pantoate pocket. Residues V177 and 185–188 (KSSR) each bind ATP.

This sequence belongs to the pantothenate synthetase family. Homodimer.

The protein localises to the cytoplasm. The catalysed reaction is (R)-pantoate + beta-alanine + ATP = (R)-pantothenate + AMP + diphosphate + H(+). The protein operates within cofactor biosynthesis; (R)-pantothenate biosynthesis; (R)-pantothenate from (R)-pantoate and beta-alanine: step 1/1. Its function is as follows. Catalyzes the condensation of pantoate with beta-alanine in an ATP-dependent reaction via a pantoyl-adenylate intermediate. The protein is Pantothenate synthetase of Staphylococcus aureus (strain Mu3 / ATCC 700698).